Consider the following 273-residue polypeptide: MTNRQWETLREYDEIKYEFYEGIAKVTINRPEVRNAFTPKTVSEMIDAFSRARDDQNVSVIVLTGEGDLAFCSGGDQKKRGHGGYVGEDQIPRLNVLDLQRLIRIIPKPVIAMVKGYAVGGGNVLNVVCDLTIAADNAIFGQTGPKVGSFDAGYGSGYLARIVGHKKAREIWYLCRQYNAQEALDMGLVNTVVPLEKVEDETVQWCKEIMKHSPTALRFLKAAMNADTDGLAGLQQMAGDATLLYYTTDEAKEGRDAFKEKRDPDFDQFPKFP.

Residues Arg-34, 73–77 (SGGDQ), Tyr-85, 117–121 (YAVGG), Thr-143, Ser-149, Tyr-246, and Lys-261 each bind substrate. 142 to 144 (QTG) is a binding site for hydrogencarbonate. Basic and acidic residues predominate over residues 254–265 (GRDAFKEKRDPD). The tract at residues 254-273 (GRDAFKEKRDPDFDQFPKFP) is disordered.

The protein belongs to the enoyl-CoA hydratase/isomerase family. MenB subfamily. Hydrogencarbonate serves as cofactor.

The catalysed reaction is 2-succinylbenzoyl-CoA + H(+) = 1,4-dihydroxy-2-naphthoyl-CoA + H2O. Its pathway is quinol/quinone metabolism; 1,4-dihydroxy-2-naphthoate biosynthesis; 1,4-dihydroxy-2-naphthoate from chorismate: step 6/7. The protein operates within quinol/quinone metabolism; menaquinone biosynthesis. Its function is as follows. Converts o-succinylbenzoyl-CoA (OSB-CoA) to 1,4-dihydroxy-2-naphthoyl-CoA (DHNA-CoA). The chain is 1,4-dihydroxy-2-naphthoyl-CoA synthase from Staphylococcus aureus (strain MSSA476).